Reading from the N-terminus, the 302-residue chain is Putative S-adenosyl-L-methionine-dependent methyltransferase MAB_4586c (302 aa).

Residues D122 and 151–152 (DL) contribute to the S-adenosyl-L-methionine site.

The protein belongs to the UPF0677 family.

In terms of biological role, exhibits S-adenosyl-L-methionine-dependent methyltransferase activity. This chain is Putative S-adenosyl-L-methionine-dependent methyltransferase MAB_4586c, found in Mycobacteroides abscessus (strain ATCC 19977 / DSM 44196 / CCUG 20993 / CIP 104536 / JCM 13569 / NCTC 13031 / TMC 1543 / L948) (Mycobacterium abscessus).